The sequence spans 244 residues: Tyrosine recombinase XerD-like (244 aa).

A Core-binding (CB) domain is found at 1-73 (MRDRISAFLE…ACNQFLYFLY (73 aa)). Positions 90 to 244 (AEKKTEKPEI…KTVLTLEKYR (155 aa)) constitute a Tyr recombinase domain. Active-site residues include K150 and R211. Residue Y243 is the O-(3'-phospho-DNA)-tyrosine intermediate of the active site.

This sequence belongs to the 'phage' integrase family. XerD-like subfamily.

It is found in the cytoplasm. Its function is as follows. Putative tyrosine recombinase. Not involved in the cutting and rejoining of the recombining DNA molecules on dif(SL) site. The sequence is that of Tyrosine recombinase XerD-like from Streptococcus pneumoniae (strain CGSP14).